The sequence spans 333 residues: L-lactate dehydrogenase B chain (333 aa).

Residues G29 to K57 and R99 contribute to the NAD(+) site. Substrate is bound by residues R106, N138, and R169. An NAD(+)-binding site is contributed by N138. H193 serves as the catalytic Proton acceptor. T248 contacts substrate.

It belongs to the LDH/MDH superfamily. LDH family. Homotetramer.

The protein localises to the cytoplasm. It carries out the reaction (S)-lactate + NAD(+) = pyruvate + NADH + H(+). It participates in fermentation; pyruvate fermentation to lactate; (S)-lactate from pyruvate: step 1/1. Interconverts simultaneously and stereospecifically pyruvate and lactate with concomitant interconversion of NADH and NAD(+). This Anguilla rostrata (American eel) protein is L-lactate dehydrogenase B chain (ldhb).